The following is a 332-amino-acid chain: tRNA dimethylallyltransferase (332 aa).

Gly14 to Thr21 serves as a coordination point for ATP. Substrate is bound at residue Thr16–Thr21. Residues Asp39 to Gln42 form an interaction with substrate tRNA region. A disordered region spans residues Lys313–Leu332. The span at Lys317 to Leu332 shows a compositional bias: basic and acidic residues.

The protein belongs to the IPP transferase family. In terms of assembly, monomer. Mg(2+) serves as cofactor.

The enzyme catalyses adenosine(37) in tRNA + dimethylallyl diphosphate = N(6)-dimethylallyladenosine(37) in tRNA + diphosphate. Its function is as follows. Catalyzes the transfer of a dimethylallyl group onto the adenine at position 37 in tRNAs that read codons beginning with uridine, leading to the formation of N6-(dimethylallyl)adenosine (i(6)A). The sequence is that of tRNA dimethylallyltransferase from Staphylococcus haemolyticus (strain JCSC1435).